The primary structure comprises 74 residues: Antimicrobial peptide HsAp1 (74 aa).

The signal sequence occupies residues 1 to 21; that stretch reads MSRRVILTLVLVTILVKTMAG. A propeptide spanning residues 22–33 is cleaved from the precursor; that stretch reads MESKKVETTDEI. Position 65 is a proline amide (Pro-65). Positions 69–74 are excised as a propeptide; the sequence is AISEQT.

It belongs to the non-disulfide-bridged peptide (NDBP) superfamily. Medium-length antimicrobial peptide (group 3) family. Expressed by the venom gland.

The protein resides in the secreted. It is found in the target cell membrane. Its function is as follows. Possesses antimicrobial activity against both Gram-negative (MIC=23.8-51.2 uM) and Gram-positive (MIC=11.8-46.5 uM) bacteria, as well as against the fungus C.tropicalis (MIC=48.6 uM). Also possesses a relatively high hemolytic activity. May act by disrupting the integrity of the bacterial cell membrane. The sequence is that of Antimicrobial peptide HsAp1 from Heterometrus spinifer (Asia giant forest scorpion).